A 541-amino-acid chain; its full sequence is 5' exonuclease Apollo (541 aa).

Lys-334 participates in a covalent cross-link: Glycyl lysine isopeptide (Lys-Gly) (interchain with G-Cter in SUMO2). 2 disordered regions span residues 350–375 and 450–489; these read TQGV…KKHK and IGLG…TTHL. Positions 358–371 are enriched in basic and acidic residues; it reads PEEKADQVKVDRDS. The TBM motif lies at 492–507; it reads ESGGLALKYLLTPVDF.

Belongs to the DNA repair metallo-beta-lactamase (DRMBL) family. Interacts with TERF2; the interaction is direct. Interacts with MUS81, MRE11 and FANCD2. Interacts with HSPA2, HSPA8 and HSPA14. Interacts with SPAG5. Ubiquitinated, leading to its degradation. Interaction with TERF2 protects it from ubiquitination.

It localises to the chromosome. The protein localises to the telomere. The protein resides in the nucleus. It is found in the cytoplasm. Its subcellular location is the cytoskeleton. It localises to the microtubule organizing center. The protein localises to the centrosome. It catalyses the reaction a beta-lactam + H2O = a substituted beta-amino acid. In terms of biological role, 5'-3' exonuclease that plays a central role in telomere maintenance and protection during S-phase. Participates in the protection of telomeres against non-homologous end-joining (NHEJ)-mediated repair, thereby ensuring that telomeres do not fuse. Plays a key role in telomeric loop (T loop) formation by being recruited by TERF2 at the leading end telomeres and by processing leading-end telomeres immediately after their replication via its exonuclease activity: generates 3' single-stranded overhang at the leading end telomeres avoiding blunt leading-end telomeres that are vulnerable to end-joining reactions and expose the telomere end in a manner that activates the DNA repair pathways. Together with TERF2, required to protect telomeres from replicative damage during replication by controlling the amount of DNA topoisomerase (TOP1, TOP2A and TOP2B) needed for telomere replication during fork passage and prevent aberrant telomere topology. Also involved in response to DNA damage: plays a role in response to DNA interstrand cross-links (ICLs) by facilitating double-strand break formation. In case of spindle stress, involved in prophase checkpoint. Possesses beta-lactamase activity, catalyzing the hydrolysis of penicillin G and nitrocefin. Exhibits no activity towards other beta-lactam antibiotic classes including cephalosporins (cefotaxime) and carbapenems (imipenem). The chain is 5' exonuclease Apollo (Dclre1b) from Rattus norvegicus (Rat).